Reading from the N-terminus, the 130-residue chain is Small ribosomal subunit protein uS8 (130 aa).

The protein belongs to the universal ribosomal protein uS8 family. Part of the 30S ribosomal subunit. Contacts proteins S5 and S12.

One of the primary rRNA binding proteins, it binds directly to 16S rRNA central domain where it helps coordinate assembly of the platform of the 30S subunit. In Aeromonas salmonicida (strain A449), this protein is Small ribosomal subunit protein uS8.